The following is a 256-amino-acid chain: MSLLAAAIPSTSSHFSAPFLPSFRMPRKSLTAPLHRIRRPRPFTVVSSVPDPAAGPVEYTPWLIAGLGNPGNKYYGTRHNVGFEMVDRIAAEEGITMNTIQSKSLLGIGSIGEVPVLVVKPQSYMNYSGEAIGPLAAYYQVPLRHILLIYDDTSLPNGVLRLQKKGGHGRHNGLQNVIEHLDGRREFPRLSIGIGSPPGKMDPRAFLLQKFSSEERVQIDTALEQGVDAVRTLVLKGFSGSTERFNLVQKYKFHRV.

The N-terminal 45 residues, 1–45 (MSLLAAAIPSTSSHFSAPFLPSFRMPRKSLTAPLHRIRRPRPFTV), are a transit peptide targeting the chloroplast. Y74 contacts tRNA. H79 functions as the Proton acceptor in the catalytic mechanism. Residues Y124, N126, and N172 each contribute to the tRNA site.

It belongs to the PTH family. CRS2 subfamily. Interacts with CAF1 and CAF2. Part of large ribonucleo-protein complexes that include group IIB introns and either CAF1 or CAF2.

It is found in the plastid. Its subcellular location is the chloroplast stroma. In terms of biological role, required for the splicing of group IIB introns in chloroplasts. Forms complexes with either CAF1 or CAF2 which, in turn, interact with RNA and confer intron specificity of the splicing particles. Has no peptidyl-tRNA hydrolase activity. This Zea mays (Maize) protein is Chloroplastic group IIB intron splicing facilitator CRS2, chloroplastic (CRS2).